Here is a 206-residue protein sequence, read N- to C-terminus: Guanylate kinase (206 aa).

The region spanning 5-184 (GMLIVLSGPS…AAERIKAIIR (180 aa)) is the Guanylate kinase-like domain. 12-19 (GPSGVGKG) is an ATP binding site.

It belongs to the guanylate kinase family.

The protein localises to the cytoplasm. The catalysed reaction is GMP + ATP = GDP + ADP. Essential for recycling GMP and indirectly, cGMP. The polypeptide is Guanylate kinase (Lactiplantibacillus plantarum (strain ATCC BAA-793 / NCIMB 8826 / WCFS1) (Lactobacillus plantarum)).